Consider the following 858-residue polypeptide: Transcription factor pytR (858 aa).

A disordered region spans residues 1–35 (MAHFSRVASDPSLAPQPSAPSGLDSSTTSSSSTGL). Positions 39-65 (CTFCRARKIRCSSGPICSACRERNINC) form a DNA-binding region, zn(2)-C6 fungal-type. The interval 72–99 (RKGRPRRRGTNTSNAQAKKGDQENPTLG) is disordered.

It localises to the nucleus. Functionally, transcription factor that regulates the expression of the gene cluster that mediates the biosynthesis of Pyranterreones, a family of antioxidative compounds. This is Transcription factor pytR from Aspergillus terreus (strain NIH 2624 / FGSC A1156).